A 354-amino-acid chain; its full sequence is Phosphate acyltransferase (354 aa).

Belongs to the PlsX family. In terms of assembly, homodimer. Probably interacts with PlsY.

The protein localises to the cytoplasm. The enzyme catalyses a fatty acyl-[ACP] + phosphate = an acyl phosphate + holo-[ACP]. It functions in the pathway lipid metabolism; phospholipid metabolism. Its function is as follows. Catalyzes the reversible formation of acyl-phosphate (acyl-PO(4)) from acyl-[acyl-carrier-protein] (acyl-ACP). This enzyme utilizes acyl-ACP as fatty acyl donor, but not acyl-CoA. The protein is Phosphate acyltransferase of Ralstonia nicotianae (strain ATCC BAA-1114 / GMI1000) (Ralstonia solanacearum).